The sequence spans 35 residues: Alpha-amanitin proprotein 1 (35 aa).

Residues 1–10 (MFDTNATRLP) constitute a propeptide that is removed on maturation. I11 is modified ((3R,4R)-4,5-dihydroxyisoleucine; in form alpha-amanitin). A (3R,4S)-4-hydroxyisoleucine; in form gamma-amanitin modification is found at I11. Residues 11 to 18 (IWGIGCNP) constitute a cross-link (cyclopeptide (Ile-Pro)). The 2'-cysteinyl-6'-hydroxytryptophan sulfoxide (Trp-Cys) cross-link spans 12-16 (WGIGC). The residue at position 18 (P18) is a 4-hydroxyproline. A propeptide spanning residues 19 to 35 (WTAEHVDQTLASGNDIC) is cleaved from the precursor.

This sequence belongs to the MSDIN fungal toxin family. Post-translationally, processed by the macrocyclase-peptidase enzyme POPB to yield a toxic bicyclic octapeptide. POPB first removes 10 residues from the N-terminus. Conformational trapping of the remaining peptide forces the enzyme to release this intermediate rather than proceed to macrocyclization. The enzyme rebinds the remaining peptide in a different conformation and catalyzes macrocyclization of the N-terminal 8 residues.

Its function is as follows. Major toxin belonging to the bicyclic octapeptides amatoxins that acts by binding non-competitively to RNA polymerase II and greatly slowing the elongation of transcripts from target promoters. The chain is Alpha-amanitin proprotein 1 from Galerina marginata (strain CBS 339.88).